The following is a 400-amino-acid chain: Acetylornithine aminotransferase (400 aa).

Pyridoxal 5'-phosphate contacts are provided by residues 102 to 103 (GA) and Phe135. Arg138 serves as a coordination point for N(2)-acetyl-L-ornithine. 220–223 (DEVQ) contributes to the pyridoxal 5'-phosphate binding site. Lys249 carries the N6-(pyridoxal phosphate)lysine modification. Ser276 is a N(2)-acetyl-L-ornithine binding site. Thr277 is a pyridoxal 5'-phosphate binding site.

This sequence belongs to the class-III pyridoxal-phosphate-dependent aminotransferase family. ArgD subfamily. In terms of assembly, homodimer. Requires pyridoxal 5'-phosphate as cofactor.

The protein resides in the cytoplasm. It carries out the reaction N(2)-acetyl-L-ornithine + 2-oxoglutarate = N-acetyl-L-glutamate 5-semialdehyde + L-glutamate. The protein operates within amino-acid biosynthesis; L-arginine biosynthesis; N(2)-acetyl-L-ornithine from L-glutamate: step 4/4. The polypeptide is Acetylornithine aminotransferase (Gloeobacter violaceus (strain ATCC 29082 / PCC 7421)).